Here is a 365-residue protein sequence, read N- to C-terminus: Histidinol-phosphate aminotransferase (365 aa).

At lysine 223 the chain carries N6-(pyridoxal phosphate)lysine.

The protein belongs to the class-II pyridoxal-phosphate-dependent aminotransferase family. Histidinol-phosphate aminotransferase subfamily. Homodimer. Pyridoxal 5'-phosphate serves as cofactor.

It catalyses the reaction L-histidinol phosphate + 2-oxoglutarate = 3-(imidazol-4-yl)-2-oxopropyl phosphate + L-glutamate. It functions in the pathway amino-acid biosynthesis; L-histidine biosynthesis; L-histidine from 5-phospho-alpha-D-ribose 1-diphosphate: step 7/9. The polypeptide is Histidinol-phosphate aminotransferase (Bacillus pumilus (strain SAFR-032)).